The sequence spans 545 residues: Capsular polysaccharide phosphotransferase SacB (545 aa).

It belongs to the stealth family.

Part of a capsular biosynthesis operon and has been suggested to be the polymerase that links individual UDP-N-acetyl-D-mannosamine monomers. In serotype A the capsule is composed of repeated units of (alpha 1-6)-linked N-acetyl-D-mannosamine-1-phosphate. Non-polar disruption of this open reading frame prevented capsule synthesis. The sequence is that of Capsular polysaccharide phosphotransferase SacB (sacB) from Neisseria meningitidis serogroup A.